The chain runs to 69 residues: DNA gyrase inhibitor YacG (69 aa).

The Zn(2+) site is built by Cys-14, Cys-17, Cys-33, and Cys-37. The disordered stretch occupies residues 46–69; the sequence is ADEEKSIPGAPDMSDSDGWSEDQY. The span at 59-69 shows a compositional bias: acidic residues; sequence SDSDGWSEDQY.

The protein belongs to the DNA gyrase inhibitor YacG family. Interacts with GyrB. The cofactor is Zn(2+).

Functionally, inhibits all the catalytic activities of DNA gyrase by preventing its interaction with DNA. Acts by binding directly to the C-terminal domain of GyrB, which probably disrupts DNA binding by the gyrase. This chain is DNA gyrase inhibitor YacG, found in Aliivibrio fischeri (strain MJ11) (Vibrio fischeri).